The chain runs to 384 residues: Kinesin-like protein KIF25 (384 aa).

Positions 1–20 (MTWTSGQLQREKQARPGSGA) are disordered. The Kinesin motor domain maps to 7-363 (QLQREKQARP…LGFGIRARQV (357 aa)). 65–72 (GQTGSGKS) contributes to the ATP binding site. Disordered stretches follow at residues 217-256 (DQAC…NPAG) and 362-384 (QVQR…RRPD).

It belongs to the TRAFAC class myosin-kinesin ATPase superfamily. Kinesin family. In terms of assembly, homotetramer.

The protein localises to the cytoplasm. Its subcellular location is the cytoskeleton. It is found in the microtubule organizing center. It localises to the centrosome. In terms of biological role, minus-end microtubule-dependent motor protein. Acts as a negative regulator of centrosome separation required to prevent premature centrosome separation during interphase. Required to maintain a centered nucleus to ensure that the spindle is stably oriented at the onset of mitosis. May also act as a negative regulator of amino acid starvation-induced autophagy. The sequence is that of Kinesin-like protein KIF25 from Homo sapiens (Human).